A 424-amino-acid polypeptide reads, in one-letter code: STAM-binding protein (424 aa).

Positions 1 to 127 (MSDHGDVSLP…YEQYKERKKK (127 aa)) are interaction with CHMP3. 2 positions are modified to phosphoserine: serine 2 and serine 48. The interval 227-231 (PAKPP) is interaction with STAM. A Phosphoserine modification is found at serine 243. The 132-residue stretch at 257 to 388 (IVVPRNLCSE…LTDYGLQEIS (132 aa)) folds into the MPN domain. Zn(2+) contacts are provided by histidine 335, histidine 337, aspartate 348, histidine 350, cysteine 390, histidine 396, and histidine 398. The JAMM motif signature appears at 335 to 348 (HTHPTQTAFLSSVD).

The protein belongs to the peptidase M67C family. Interacts with STAM. Interacts with SMAD6 and SMAD7. Interacts with CHMP3; the interaction appears to relieve the autoinhibition of CHMP3. Interacts with SMURF2 and RNF11; this interaction promotes ubiquitination. Requires Zn(2+) as cofactor. Phosphorylated after BMP type I receptor activation. In terms of processing, ubiquitinated by SMURF2 in the presence of RNF11. In terms of tissue distribution, expressed in brain.

It localises to the nucleus. It is found in the membrane. The protein localises to the cytoplasm. The protein resides in the early endosome. With respect to regulation, inhibited by N-ethylmaleimide. Zinc metalloprotease that specifically cleaves 'Lys-63'-linked polyubiquitin chains. Does not cleave 'Lys-48'-linked polyubiquitin chains. Plays a role in signal transduction for cell growth and MYC induction mediated by IL-2 and GM-CSF. Potentiates BMP (bone morphogenetic protein) signaling by antagonizing the inhibitory action of SMAD6 and SMAD7. Has a key role in regulation of cell surface receptor-mediated endocytosis and ubiquitin-dependent sorting of receptors to lysosomes. Endosomal localization of STAMBP is required for efficient EGFR degradation but not for its internalization. Involved in the negative regulation of PI3K-AKT-mTOR and RAS-MAP signaling pathways. In Mus musculus (Mouse), this protein is STAM-binding protein (Stambp).